Here is a 1093-residue protein sequence, read N- to C-terminus: Isoleucine--tRNA ligase, chloroplastic/mitochondrial (1093 aa).

Residues proline 69–lysine 103 form a disordered region. The segment covering lysine 90–lysine 103 has biased composition (basic and acidic residues). Positions proline 155–histidine 165 match the 'HIGH' region motif. Glutamate 682 is an L-isoleucyl-5'-AMP binding site. A 'KMSKS' region motif is present at residues lysine 723 to serine 727. Residue lysine 726 participates in ATP binding. Zn(2+) is bound by residues cysteine 1050, cysteine 1053, cysteine 1070, and cysteine 1073.

It belongs to the class-I aminoacyl-tRNA synthetase family.

The protein resides in the plastid. The protein localises to the chloroplast. It localises to the mitochondrion. It catalyses the reaction tRNA(Ile) + L-isoleucine + ATP = L-isoleucyl-tRNA(Ile) + AMP + diphosphate. The polypeptide is Isoleucine--tRNA ligase, chloroplastic/mitochondrial (Arabidopsis thaliana (Mouse-ear cress)).